A 203-amino-acid polypeptide reads, in one-letter code: Pyridoxine/pyridoxamine 5'-phosphate oxidase (203 aa).

Residues 50 to 55 (RMVLLK), 65 to 66 (YT), Lys71, Lys72, and Gln94 contribute to the FMN site. Lys55 is a binding site for substrate. Substrate is bound by residues Tyr112, Arg116, and Ser120. Residues 129-130 (QS) and Trp174 each bind FMN. Substrate is bound at residue 180-182 (RLH). Arg184 serves as a coordination point for FMN.

The protein belongs to the pyridoxamine 5'-phosphate oxidase family. As to quaternary structure, homodimer. FMN serves as cofactor.

It carries out the reaction pyridoxamine 5'-phosphate + O2 + H2O = pyridoxal 5'-phosphate + H2O2 + NH4(+). The catalysed reaction is pyridoxine 5'-phosphate + O2 = pyridoxal 5'-phosphate + H2O2. It functions in the pathway cofactor metabolism; pyridoxal 5'-phosphate salvage; pyridoxal 5'-phosphate from pyridoxamine 5'-phosphate: step 1/1. Its pathway is cofactor metabolism; pyridoxal 5'-phosphate salvage; pyridoxal 5'-phosphate from pyridoxine 5'-phosphate: step 1/1. Functionally, catalyzes the oxidation of either pyridoxine 5'-phosphate (PNP) or pyridoxamine 5'-phosphate (PMP) into pyridoxal 5'-phosphate (PLP). This Brucella canis (strain ATCC 23365 / NCTC 10854 / RM-666) protein is Pyridoxine/pyridoxamine 5'-phosphate oxidase.